The sequence spans 421 residues: 4-methylaminobutanoate oxidase (methylamine-forming) (421 aa).

FAD is bound by residues Glu-31, Arg-33, Arg-39, and Glu-379.

It belongs to the flavin monoamine oxidase family. In terms of assembly, monomer. The cofactor is FAD.

It carries out the reaction 4-(methylamino)butanoate + O2 + H2O = succinate semialdehyde + methylamine + H2O2. The protein operates within alkaloid degradation; nicotine degradation. In terms of biological role, catalyzes the removal of methylamine from 4-methylaminobutanoate with the formation of succinate semialdehyde. Is involved in the catabolism of 4-methylaminobutanoate produced from nicotine. Has a very weak monoamine oxidase activity with 4-aminobutanoate. Cannot use spermidine, spermine, sarcosine, dimethylglycine, glycine, choline, betaine, alpha-methylamino isobutyrate, methylamine propionitrile and methylamino propylamine as substrate. The protein is 4-methylaminobutanoate oxidase (methylamine-forming) (mao) of Paenarthrobacter nicotinovorans (Arthrobacter nicotinovorans).